Reading from the N-terminus, the 163-residue chain is Lipoprotein signal peptidase (163 aa).

Helical transmembrane passes span 7-27 (LSFL…KYLV), 64-84 (WQKY…VYLL), and 99-119 (ALII…GFVV). Residues D120 and D138 contribute to the active site. The chain crosses the membrane as a helical span at residues 133–153 (VFNVADIAICVGVGLLILDSF).

This sequence belongs to the peptidase A8 family.

Its subcellular location is the cell inner membrane. It carries out the reaction Release of signal peptides from bacterial membrane prolipoproteins. Hydrolyzes -Xaa-Yaa-Zaa-|-(S,diacylglyceryl)Cys-, in which Xaa is hydrophobic (preferably Leu), and Yaa (Ala or Ser) and Zaa (Gly or Ala) have small, neutral side chains.. The protein operates within protein modification; lipoprotein biosynthesis (signal peptide cleavage). This protein specifically catalyzes the removal of signal peptides from prolipoproteins. The protein is Lipoprotein signal peptidase of Actinobacillus succinogenes (strain ATCC 55618 / DSM 22257 / CCUG 43843 / 130Z).